A 301-amino-acid chain; its full sequence is GTPase Era (301 aa).

Positions 7-175 constitute an Era-type G domain; that stretch reads YCGFIAIVGR…AGIVRKHLPE (169 aa). A G1 region spans residues 15–22; it reads GRPNVGKS. 15 to 22 serves as a coordination point for GTP; the sequence is GRPNVGKS. Positions 41–45 are G2; that stretch reads QTTRH. Positions 62 to 65 are G3; it reads DTPG. GTP-binding positions include 62 to 66 and 124 to 127; these read DTPGL and NKVD. Residues 124-127 are G4; the sequence is NKVD. The segment at 154 to 156 is G5; that stretch reads ISA. The 78-residue stretch at 206–283 folds into the KH type-2 domain; it reads LGAELPYSVT…HLELWVKVKS (78 aa).

The protein belongs to the TRAFAC class TrmE-Era-EngA-EngB-Septin-like GTPase superfamily. Era GTPase family. Monomer.

The protein resides in the cytoplasm. It localises to the cell inner membrane. Functionally, an essential GTPase that binds both GDP and GTP, with rapid nucleotide exchange. Plays a role in 16S rRNA processing and 30S ribosomal subunit biogenesis and possibly also in cell cycle regulation and energy metabolism. The polypeptide is GTPase Era (Salmonella agona (strain SL483)).